Reading from the N-terminus, the 388-residue chain is Protochlorophyllide reductase A, chloroplastic (388 aa).

The N-terminal 74 residues, 1–74 (MALQLLPSTL…KPSGKKTLRQ (74 aa)), are a transit peptide targeting the chloroplast.

Belongs to the short-chain dehydrogenases/reductases (SDR) family. POR subfamily.

The protein localises to the plastid. It localises to the chloroplast. It catalyses the reaction chlorophyllide a + NADP(+) = protochlorophyllide a + NADPH + H(+). Its pathway is porphyrin-containing compound metabolism; chlorophyll biosynthesis. Functionally, phototransformation of protochlorophyllide (Pchlide) to chlorophyllide (Chlide). The protein is Protochlorophyllide reductase A, chloroplastic (PORA) of Triticum aestivum (Wheat).